A 560-amino-acid polypeptide reads, in one-letter code: Vanillyl-alcohol oxidase (560 aa).

The 206-residue stretch at 67 to 272 (DYFLASAIVA…TKIGIWLMPN (206 aa)) folds into the FAD-binding PCMH-type domain. Residue Y108 is part of the active site. H422 carries the tele-8alpha-FAD histidine modification. Residues Y503 and R504 contribute to the active site.

This sequence to bacterial flavocytochrome p-cresol methyl hydroxylase. As to quaternary structure, homooctamer (tetramer of tightly interacting dimers). It depends on FAD as a cofactor.

It is found in the peroxisome. Its subcellular location is the cytoplasm. The enzyme catalyses 4-hydroxy-3-methoxy-benzenemethanol + O2 = vanillin + H2O2. Its activity is regulated as follows. Competitively inhibited by cinnamyl and coniferyl alcohols and by isoeugenol. Its function is as follows. Catalyzes the conversion of vanillin alcohol to vanillin, and also the conversion of a wide range of phenolic compounds bearing side chains of variable size at the para position of the aromatic ring. Crucial for the degradation of the secondary metabolites derived from the degradation of the lignin. Catalyzes besides the oxidation of 4-hydroxybenzyl alcohols, the oxidative deamination of 4-hydroxybenzylamines, the oxidative demethylation of 4-(methoxy-methyl)phenols and the oxidative hydration of 4-allylphenols. Most active with 4-allylphenols. This Penicillium simplicissimum protein is Vanillyl-alcohol oxidase (VAOA).